The primary structure comprises 113 residues: Ribonuclease P protein component (113 aa).

The protein belongs to the RnpA family. As to quaternary structure, consists of a catalytic RNA component (M1 or rnpB) and a protein subunit.

It catalyses the reaction Endonucleolytic cleavage of RNA, removing 5'-extranucleotides from tRNA precursor.. RNaseP catalyzes the removal of the 5'-leader sequence from pre-tRNA to produce the mature 5'-terminus. It can also cleave other RNA substrates such as 4.5S RNA. The protein component plays an auxiliary but essential role in vivo by binding to the 5'-leader sequence and broadening the substrate specificity of the ribozyme. The sequence is that of Ribonuclease P protein component from Ureaplasma parvum serovar 3 (strain ATCC 27815 / 27 / NCTC 11736).